Consider the following 129-residue polypeptide: Protein yippee-like (129 aa).

The region spanning 12–109 (KIYSCKHCGT…LERFKITGPD (98 aa)) is the Yippee domain. Residues Cys-16, Cys-19, Cys-72, and Cys-75 each contribute to the Zn(2+) site.

Belongs to the yippee family.

The sequence is that of Protein yippee-like from Solanum tuberosum (Potato).